Here is a 441-residue protein sequence, read N- to C-terminus: 23S rRNA (uracil(1939)-C(5))-methyltransferase RlmD (441 aa).

The region spanning 1–56 (MSIDSLDMEARGVGRLLNEDGTPGKVIFVEGALPGETVSYRSFRRKPSYEQAHLVE) is the TRAM domain. 4 residues coordinate [4Fe-4S] cluster: cysteine 69, cysteine 75, cysteine 78, and cysteine 157. S-adenosyl-L-methionine-binding residues include glutamine 265, phenylalanine 294, asparagine 299, glutamate 315, asparagine 343, and aspartate 364. The active-site Nucleophile is the cysteine 397.

It belongs to the class I-like SAM-binding methyltransferase superfamily. RNA M5U methyltransferase family. RlmD subfamily.

It catalyses the reaction uridine(1939) in 23S rRNA + S-adenosyl-L-methionine = 5-methyluridine(1939) in 23S rRNA + S-adenosyl-L-homocysteine + H(+). Catalyzes the formation of 5-methyl-uridine at position 1939 (m5U1939) in 23S rRNA. In Cupriavidus necator (strain ATCC 17699 / DSM 428 / KCTC 22496 / NCIMB 10442 / H16 / Stanier 337) (Ralstonia eutropha), this protein is 23S rRNA (uracil(1939)-C(5))-methyltransferase RlmD.